The sequence spans 180 residues: UPF0227 protein Ent638_1623 (180 aa).

Belongs to the UPF0227 family.

The chain is UPF0227 protein Ent638_1623 from Enterobacter sp. (strain 638).